We begin with the raw amino-acid sequence, 404 residues long: Serine/threonine transporter SstT (404 aa).

9 helical membrane passes run 17-37 (IGIG…VTAI), 44-64 (FVGA…VQAI), 75-95 (ITLI…VAVI), 138-158 (ALAT…GLAL), 179-199 (IVVW…FSTV), 212-232 (LLIL…NPLL), 287-307 (IPLG…VLTL), 319-339 (FLTA…ASGV), and 354-374 (FGIS…VGVI).

This sequence belongs to the dicarboxylate/amino acid:cation symporter (DAACS) (TC 2.A.23) family.

Its subcellular location is the cell membrane. It carries out the reaction L-serine(in) + Na(+)(in) = L-serine(out) + Na(+)(out). The catalysed reaction is L-threonine(in) + Na(+)(in) = L-threonine(out) + Na(+)(out). Functionally, involved in the import of serine and threonine into the cell, with the concomitant import of sodium (symport system). The polypeptide is Serine/threonine transporter SstT (Streptococcus equi subsp. zooepidemicus (strain MGCS10565)).